The primary structure comprises 1121 residues: Solute carrier family 38 member 10 (1121 aa).

Helical transmembrane passes span 4–24, 36–58, 84–104, 120–140, 153–173, 229–249, 272–292, 323–343, 345–365, and 378–398; these read AAAS…GVSV, IVLG…MFLV, LVET…YVVI, VGGT…VLPL, FSAM…LSSL, IFAS…FFGY, MLRV…ILPC, ALTL…PNVE, ILGL…PALI, and VVLW…LSVS. Disordered regions lie at residues 434 to 691, 731 to 904, and 965 to 1068; these read VVAV…EEAG, KEIH…AATG, and ISDG…ELAP. 4 stretches are compositionally biased toward basic and acidic residues: residues 439–454, 466–475, 493–508, and 544–559; these read EDGR…REEL, PGREDGKEAQ, EAHR…KVVV, and DSER…EVGK. Residue serine 612 is modified to Phosphoserine. Composition is skewed to basic and acidic residues over residues 645 to 659, 668 to 679, 731 to 752, 763 to 773, 802 to 811, and 863 to 876; these read DSDH…EEKP, EPREQRDVERAG, KEIH…EVHP, EAPEGKARETM, SLEHPERPVG, and PARE…RLAE. Threonine 772 bears the Phosphothreonine mark. Serine 802 is subject to Phosphoserine. Serine 890 and serine 966 each carry phosphoserine. The segment covering 976 to 998 has biased composition (basic and acidic residues); that stretch reads HRLDHGGYLEMRKEARGGDHMPV. A Phosphoserine modification is found at serine 999. Composition is skewed to basic and acidic residues over residues 1035–1044 and 1057–1068; these read DNAKPNRDLK and DLGPHAEGELAP.

It belongs to the amino acid/polyamine transporter 2 family.

It localises to the membrane. It carries out the reaction L-glutamate(out) = L-glutamate(in). The enzyme catalyses L-glutamine(out) = L-glutamine(in). The catalysed reaction is L-alanine(in) = L-alanine(out). It catalyses the reaction L-serine(in) = L-serine(out). It carries out the reaction L-leucine(in) = L-leucine(out). Its function is as follows. Facilitates bidirectional transport of amino acids. May act as a glutamate sensor that regulates glutamate-glutamine cycle and mTOR signaling in the brain. The transport mechanism remains to be elucidated. The protein is Solute carrier family 38 member 10 of Pongo abelii (Sumatran orangutan).